We begin with the raw amino-acid sequence, 2832 residues long: Cyclic beta-(1,2)-glucan synthase NdvB (2832 aa).

The next 7 membrane-spanning stretches (helical) occupy residues 411–431, 444–464, 810–830, 831–851, 880–900, 938–958, and 959–979; these read FAIA…VYAF, IMLL…FNTV, LIPV…EPTP, ALIW…LSLI, QVAL…DAIV, WTAP…DTGL, and PFIG…AWFV. The 208-residue stretch at 1299–1506 folds into the Glycoamylase-like domain; it reads LASEARLTSL…NGQLREWFHA (208 aa).

Belongs to the NdvB family.

Its subcellular location is the cell inner membrane. It carries out the reaction [(1-&gt;2)-beta-D-glucosyl](n) + UDP-alpha-D-glucose = [(1-&gt;2)-beta-D-glucosyl](n+1) + UDP + H(+). Involved in the biosynthesis of cyclic beta-(1,2)-glucan. It seems that NdvB is involved in three enzymatic activities. First, it may catalyze the transfer of the first glucose from UDP-Glc to an unknown amino acid. In the second enzymatic activity (UDP-Glc:beta-(1,2) oligosaccharide glucosyltransferase), it may be responsible for chain elongation. Finally, in the third activity, it may catalyze glucan cyclization and release from the protein. NdvB is also involved in nodule invasion and in bacteroid development. This Rhizobium meliloti (strain 1021) (Ensifer meliloti) protein is Cyclic beta-(1,2)-glucan synthase NdvB.